The chain runs to 233 residues: Putative nosiheptide resistance regulatory protein (233 aa).

Positions R93–A112 form a DNA-binding region, H-T-H motif. The segment at P190–A233 is disordered. The segment covering V217–A233 has biased composition (basic and acidic residues).

Functionally, seems to be involved in the regulation of nhs expression. The polypeptide is Putative nosiheptide resistance regulatory protein (Streptomyces actuosus).